We begin with the raw amino-acid sequence, 903 residues long: DNA mismatch repair protein MutS (903 aa).

Residues 1–89 form a disordered region; the sequence is MPRSASQPPD…DEPAWGHHSQ (89 aa). Low complexity-rich tracts occupy residues 20-36 and 49-62; these read APEPAAPSATATASEPE and ADAAARPRTRQATA. Position 719–726 (719–726) interacts with ATP; it reads GPNASGKS.

This sequence belongs to the DNA mismatch repair MutS family.

This protein is involved in the repair of mismatches in DNA. It is possible that it carries out the mismatch recognition step. This protein has a weak ATPase activity. The polypeptide is DNA mismatch repair protein MutS (Synechococcus sp. (strain CC9605)).